The following is a 287-amino-acid chain: Mitochondrial dicarboxylate carrier (287 aa).

3 Solcar repeats span residues 8–88, 101–188, and 197–280; these read SRWY…VRDR, EKVL…AKQL, and DNIF…LRKN. 6 helical membrane passes run 10-30, 63-82, 103-123, 163-182, 203-223, and 255-275; these read WYFG…LDLL, GLSA…FAIY, VLLG…ADLV, GATM…LSCY, FVAS…LDVL, and GLVP…VFLE.

It belongs to the mitochondrial carrier (TC 2.A.29) family. As to expression, present in high amounts in liver and kidney, and at lower levels in all the other tissues analyzed.

The protein resides in the mitochondrion inner membrane. The enzyme catalyses (S)-malate(in) + phosphate(out) = (S)-malate(out) + phosphate(in). It catalyses the reaction malonate(out) + (S)-malate(in) = malonate(in) + (S)-malate(out). It carries out the reaction (S)-malate(in) + succinate(out) = (S)-malate(out) + succinate(in). The catalysed reaction is (S)-malate(in) + sulfate(out) = (S)-malate(out) + sulfate(in). The enzyme catalyses malonate(out) + phosphate(in) = malonate(in) + phosphate(out). It catalyses the reaction succinate(out) + phosphate(in) = succinate(in) + phosphate(out). It carries out the reaction sulfate(out) + phosphate(in) = sulfate(in) + phosphate(out). The catalysed reaction is malonate(out) + succinate(in) = malonate(in) + succinate(out). Functionally, catalyzes the electroneutral exchange or flux of physiologically important metabolites such as dicarboxylates (malonate, malate, succinate), inorganic sulfur-containing anions, and phosphate, across mitochondrial inner membrane. Plays an important role in gluconeogenesis, fatty acid metabolism, urea synthesis, and sulfur metabolism, particularly in liver, by supplying the substrates for the different metabolic processes. Regulates fatty acid release from adipocytes, and contributes to systemic insulin sensitivity. The polypeptide is Mitochondrial dicarboxylate carrier (SLC25A10) (Homo sapiens (Human)).